The primary structure comprises 193 residues: Ion-translocating oxidoreductase complex subunit A (193 aa).

Helical transmembrane passes span 5 to 25, 38 to 58, 65 to 85, 102 to 122, 134 to 154, and 171 to 191; these read LLILVSTILVNNFVLVQFLGL, AMGMSLATTFVLTLSSLCSYL, APLGMEFLKTITFILVIAVVV, VLGIFLPLITTNCAVLGVALL, ILYGFGAAVGFSLVLTLFSAM, and AIGMITAGLMSLAFLGFTGLV.

It belongs to the NqrDE/RnfAE family. As to quaternary structure, the complex is composed of six subunits: RnfA, RnfB, RnfC, RnfD, RnfE and RnfG.

It is found in the cell inner membrane. Functionally, part of a membrane-bound complex that couples electron transfer with translocation of ions across the membrane. The protein is Ion-translocating oxidoreductase complex subunit A of Hahella chejuensis (strain KCTC 2396).